An 832-amino-acid polypeptide reads, in one-letter code: DEAD-box ATP-dependent RNA helicase 13 (832 aa).

Residues 1-12 (MAAAPPPPPPPQ) are compositionally biased toward pro residues. Disordered regions lie at residues 1–59 (MAAA…TMVE) and 91–173 (VEDL…DDNV). Residues 29–42 (RKGKKSRGAKKPRR) are compositionally biased toward basic residues. Residues 43–55 (AAAAAAASTSSAG) show a composition bias toward low complexity. The span at 105–114 (QKKKKRKKRK) shows a compositional bias: basic residues. Residues 128–137 (LVVECEEEGE) show a composition bias toward acidic residues. Over residues 141 to 155 (KRVKKKRRSRKKRKV) the composition is skewed to basic residues. Positions 156–167 (KEMEEKMESKED) are enriched in basic and acidic residues. The Q motif signature appears at 198 to 226 (YAWRELRLHPLLITAVRRLGFKEPTPIQK). The Helicase ATP-binding domain occupies 230–447 (PAAAHQGKDV…KLKRGLVTAK (218 aa)). 243-250 (AETGSGKT) provides a ligand contact to ATP. The DEAD box motif lies at 371–374 (DEAD). The Helicase C-terminal domain maps to 484-645 (KLEESFIECS…QFPVDHAYMP (162 aa)). Residues 800–832 (RRLAENWRRKKQKEKKSTREQKRKEKRIAKERD) are disordered. Residues 814-832 (KKSTREQKRKEKRIAKERD) are compositionally biased toward basic and acidic residues.

This sequence belongs to the DEAD box helicase family. DDX24/MAK5 subfamily.

It carries out the reaction ATP + H2O = ADP + phosphate + H(+). The polypeptide is DEAD-box ATP-dependent RNA helicase 13 (Oryza sativa subsp. japonica (Rice)).